The following is a 277-amino-acid chain: Cell death abnormality protein 2 (277 aa).

Residues 14–112 (FYFPGMSRED…EASLLSAYKK (99 aa)) form the SH2 domain. Residues 113–173 (PIIEVVVGTF…PANYVQVQSG (61 aa)) enclose the SH3 1 domain. The interval 179–217 (RISKGTSQSSIGSSGNGAERFSSTSTSSENAEAHPTLPT) is disordered. Over residues 182–206 (KGTSQSSIGSSGNGAERFSSTSTSS) the composition is skewed to low complexity. The region spanning 214–275 (TLPTTAKVTF…PFTYIRFNTA (62 aa)) is the SH3 2 domain.

It belongs to the CRK family. As to quaternary structure, interacts with ced-5 (via C-terminus which contains a candidate SH3-binding, proline-rich region). Forms a ternary complex with ced-5 and ced-12. Interacts (via SH-2 domain) with src-1 (when activated and phosphorylated at 'Tyr-416').

Required for cell migration and engulfment of cell corpses but not for programmed cell death/apoptosis. Also has a role in the migration of the 2 gonadal distal tip cells (DTCs). The protein is Cell death abnormality protein 2 of Caenorhabditis briggsae.